The chain runs to 65 residues: Large ribosomal subunit protein bL35 (65 aa).

This sequence belongs to the bacterial ribosomal protein bL35 family.

The protein is Large ribosomal subunit protein bL35 of Psychrobacter arcticus (strain DSM 17307 / VKM B-2377 / 273-4).